We begin with the raw amino-acid sequence, 158 residues long: Transcription factor BTF3 homolog 4 (158 aa).

Position 5 is an N6-methyllysine (Lys5). The NAC-A/B domain maps to Thr33–Leu98. The residue at position 111 (Thr111) is a Phosphothreonine. The tract at residues Gln123 to Asn158 is disordered. A compositionally biased stretch (acidic residues) spans Asp134–Asp150.

It belongs to the NAC-beta family.

This Bos taurus (Bovine) protein is Transcription factor BTF3 homolog 4 (BTF3L4).